The chain runs to 278 residues: HTH-type transcriptional activator RhaS (278 aa).

The HTH araC/xylS-type domain maps to 174-272; the sequence is NLLLAWLEDH…NWSPRDIRQG (99 aa). DNA-binding regions (H-T-H motif) lie at residues 191 to 212 and 239 to 262; these read DAVADQFSLSLRTLHRQLKQQT and VTDIAYRCGFSDSNHFSTLFRREF.

In terms of assembly, binds DNA as a dimer.

The protein localises to the cytoplasm. Its function is as follows. Activates expression of the rhaBAD and rhaT operons. The protein is HTH-type transcriptional activator RhaS of Shigella sonnei (strain Ss046).